Here is a 578-residue protein sequence, read N- to C-terminus: Putative diflavin flavoprotein A 2 (578 aa).

The zinc metallo-hydrolase stretch occupies residues 39–233; the sequence is QQGTTSNSYL…PPPRLYAPAH (195 aa). The Flavodoxin-like domain occupies 262-404; the sequence is VALFYASAYG…AANEFAQALK (143 aa). The flavodoxin-reductase-like stretch occupies residues 429-578; it reads VNRVVGSLCV…TAIQHRKTSS (150 aa).

In the N-terminal section; belongs to the zinc metallo-hydrolase group 3 family. This sequence in the C-terminal section; belongs to the flavodoxin reductase family. Fe cation is required as a cofactor.

Mediates electron transfer from NADH to oxygen, reducing it to water. This modular protein has 3 redox cofactors, in other organisms the same activity requires 2 or 3 proteins. The chain is Putative diflavin flavoprotein A 2 (dfa2) from Thermosynechococcus vestitus (strain NIES-2133 / IAM M-273 / BP-1).